Reading from the N-terminus, the 338-residue chain is P2Y purinoceptor 14 (338 aa).

Residues 1-29 (MNNSTTTDPPNQPCSWNTLITKQIIPVLY) are Extracellular-facing. Asn-2 and Asn-3 each carry an N-linked (GlcNAc...) asparagine glycan. A helical membrane pass occupies residues 30–50 (GMVFITGLLLNGISGWIFFYV). At 51 to 55 (PSSKS) the chain is on the cytoplasmic side. Residues 56–76 (FIIYLKNIVVADFLMGLTFPF) traverse the membrane as a helical segment. At 77-96 (KVLGDSGLGPWQVNVFVCRV) the chain is on the extracellular side. Cys-94 and Cys-172 form a disulfide bridge. The helical transmembrane segment at 97–117 (SAVIFYVNMYVSIVFFGLISF) threads the bilayer. The Cytoplasmic segment spans residues 118–139 (DRYYKIVKPLLTSIVQSVNYSK). The chain crosses the membrane as a helical span at residues 140-160 (LLSVLVWMLMLLLAVPNIILT). The Extracellular portion of the chain corresponds to 161–188 (NQGVKEVTKIQCMELKNELGRKWHKASN). A helical membrane pass occupies residues 189 to 209 (YIFVSIFWVVFLLLIVFYTAI). Residues 210–234 (TRKIFKSHLKSRKNSTSVKRKSSRN) lie on the Cytoplasmic side of the membrane. A helical transmembrane segment spans residues 235 to 255 (IFSIVLVFVVCFVPYHIARIP). Residues 256 to 278 (YTKSQTEGHYSCRTKETLLYAKE) are Extracellular-facing. The helical transmembrane segment at 279–299 (FTLLLSAANVCLDPIIYFFLC) threads the bilayer. Residues 300-338 (QPFREVLNKKLHMSLKVQNDLEVSKTKRENAIHESTDTL) lie on the Cytoplasmic side of the membrane.

It belongs to the G-protein coupled receptor 1 family.

The protein localises to the cell membrane. Functionally, receptor for UDP-glucose coupled to G-proteins. The protein is P2Y purinoceptor 14 (P2ry14) of Mus musculus (Mouse).